Here is a 433-residue protein sequence, read N- to C-terminus: Acetylcholine receptor-like protein cup-4 (433 aa).

Residues 1–24 form the signal peptide; the sequence is MKIIIFVCFILIFYLPIQKKHVNS. N-linked (GlcNAc...) asparagine glycosylation is found at Asn-41 and Asn-68. An intrachain disulfide couples Cys-178 to Cys-192. Residues Asn-237 and Asn-249 are each glycosylated (N-linked (GlcNAc...) asparagine). A run of 4 helical transmembrane segments spans residues 282–302, 307–327, 337–357, and 413–433; these read EAAV…TFFI, STFL…HDLV, IPFC…TLVL, and PIIG…CLLL.

This sequence belongs to the ligand-gated ion channel (TC 1.A.9) family. Acetylcholine receptor (TC 1.A.9.1) subfamily. Expressed in coelomocytes.

The protein localises to the cytoplasmic vesicle membrane. Thought to regulate endocytosis in coelomocytes through modulation of phospholipase C activity. Possible acetylcholine receptor. This is Acetylcholine receptor-like protein cup-4 (cup-4) from Caenorhabditis elegans.